We begin with the raw amino-acid sequence, 337 residues long: Cytoskeleton protein RodZ (337 aa).

At 1–111 (MNTEATHDQN…LGKRRKKRDG (111 aa)) the chain is on the cytoplasmic side. The 53-residue stretch at 19-71 (LRNAREQLGLSQQAVAERLCLKVSTVRDIEEDKAPADLASTFLRGYIRSYARL) folds into the HTH cro/C1-type domain. Positions 30–49 (QQAVAERLCLKVSTVRDIEE) form a DNA-binding region, H-T-H motif. The chain crosses the membrane as a helical; Signal-anchor for type II membrane protein span at residues 112-132 (WLMTFTWLVLFVVIGLSGAWW). The Periplasmic portion of the chain corresponds to 133–337 (WQDHKAQQEE…TLNAEQSPAQ (205 aa)). Polar residues predominate over residues 145-167 (TMADQSSAELSSNSEQGQSVPLN). The disordered stretch occupies residues 145-235 (TMADQSSAEL…PTAATTPDGA (91 aa)). The span at 168–207 (TSTTTDPATTSTPPASVDTTATNTQTPAVTAPAPAVDPQQ) shows a compositional bias: low complexity. Over residues 208–218 (NAVVSPSQANV) the composition is skewed to polar residues. Positions 219–235 (DTAATPAPTAATTPDGA) are enriched in low complexity.

It belongs to the RodZ family.

Its subcellular location is the cell inner membrane. Its function is as follows. Cytoskeletal protein that is involved in cell-shape control through regulation of the length of the long axis. The protein is Cytoskeleton protein RodZ of Shigella boydii serotype 4 (strain Sb227).